The following is a 318-amino-acid chain: Protein W (318 aa).

2 disordered regions span residues 1–23 (MDQDAFILKEDSEVEREAPGGRE) and 38–318 (SEPT…KKGA). The span at 7 to 20 (ILKEDSEVEREAPG) shows a compositional bias: basic and acidic residues. The segment covering 50 to 59 (LHNTINTPQG) has biased composition (polar residues). Phosphoserine; by host is present on S68. Over residues 83–101 (RSGEESRVSGRTSKPEAEA) the composition is skewed to basic and acidic residues. S125 carries the phosphoserine; by host modification. The segment covering 150–168 (GIEDENREMAAHPDKRGED) has biased composition (basic and acidic residues). Residues 191-206 (ASNNGRSMEPGSSHSA) show a composition bias toward polar residues. A phosphoserine; by host mark is found at S192, S249, S257, and S260.

The polypeptide is Protein W (P/V/C) (Sendai virus (strain Z) (SeV)).